The chain runs to 699 residues: Auxin response factor 1 (699 aa).

Residues 122-224 (FCKILTPSDT…EQRVGVRRLV (103 aa)) constitute a DNA-binding region (TF-B3). Disordered regions lie at residues 539–565 (TTTDDKSSVGAGEASAKGTGSHEDSGQ) and 680–699 (EPHPKLLSSANPEQDQKTGF). One can recognise a PB1 domain in the interval 595–684 (RTRIKVQMHG…DEKKIEPHPK (90 aa)). Polar residues predominate over residues 687-699 (SSANPEQDQKTGF).

Belongs to the ARF family. Homodimers and heterodimers. As to expression, expressed in roots, culms, leaves and young panicles.

The protein resides in the nucleus. In terms of biological role, auxin response factors (ARFs) are transcriptional factors that bind specifically to the DNA sequence 5'-TGTCTC-3' found in the auxin-responsive promoter elements (AuxREs). This is Auxin response factor 1 (ARF1) from Oryza sativa subsp. japonica (Rice).